The sequence spans 424 residues: GTPase Obg (424 aa).

Positions 1–160 (MFDRVEIRIK…YELILELKLI (160 aa)) constitute an Obg domain. An OBG-type G domain is found at 161–328 (ADVAIIGYPN…LLDKVAEKLA (168 aa)). Residues 167–174 (GYPNVGKS), 192–196 (FTTLS), 213–216 (EVPG), 280–283 (NKID), and 309–311 (SAL) contribute to the GTP site. Positions 174 and 194 each coordinate Mg(2+). Residues 349–424 (PAPKGKMGFH…IITGRLEWYL (76 aa)) form the OCT domain.

The protein belongs to the TRAFAC class OBG-HflX-like GTPase superfamily. OBG GTPase family. Monomer. Requires Mg(2+) as cofactor.

Its subcellular location is the cytoplasm. Its function is as follows. An essential GTPase which binds GTP, GDP and possibly (p)ppGpp with moderate affinity, with high nucleotide exchange rates and a fairly low GTP hydrolysis rate. Plays a role in control of the cell cycle, stress response, ribosome biogenesis and in those bacteria that undergo differentiation, in morphogenesis control. The sequence is that of GTPase Obg from Dehalococcoides mccartyi (strain ATCC BAA-2266 / KCTC 15142 / 195) (Dehalococcoides ethenogenes (strain 195)).